The sequence spans 89 residues: MAKESVKARNLKRQALVERYAAKRAKLKEAGDYLALDKLPKNASPVRVRNRCKITGRARGYMRKFGISRIVFREWAAQGKIPGVIKASW.

It belongs to the universal ribosomal protein uS14 family. As to quaternary structure, part of the 30S ribosomal subunit. Contacts proteins S3 and S10.

Its function is as follows. Binds 16S rRNA, required for the assembly of 30S particles and may also be responsible for determining the conformation of the 16S rRNA at the A site. The chain is Small ribosomal subunit protein uS14 from Amoebophilus asiaticus (strain 5a2).